Reading from the N-terminus, the 806-residue chain is Dimethyl sulfoxide reductase DmsA (806 aa).

The tat-type signal signal peptide spans 1–35 (MSNFNQISRRDFVKASSAGAALAVSNLTLPFNVMA). A 4Fe-4S Mo/W bis-MGD-type domain is found at 47 to 109 (ERIVWSACTV…SMRRRVYNPD (63 aa)). Residues Cys54, Cys58, Cys62, and Cys95 each contribute to the [4Fe-4S] cluster site. Mo-bis(molybdopterin guanine dinucleotide) is bound by residues 163–167 (LGGTM), Ser196, 236–237 (ET), 262–263 (ID), 283–285 (GTD), 378–379 (WG), Arg382, Asn480, 504–505 (ID), His693, 699–701 (HST), Asn780, and 796–797 (QH). The disordered stretch occupies residues 786-806 (RPSPLAKGNPQHSNLVQVERL). The segment covering 795–806 (PQHSNLVQVERL) has biased composition (polar residues).

It belongs to the prokaryotic molybdopterin-containing oxidoreductase family. As to quaternary structure, heterotrimeric enzyme composed of a catalytic heterodimer (DmsAB) and a membrane anchor protein (DmsC). The cofactor is [4Fe-4S] cluster. It depends on Mo-bis(molybdopterin guanine dinucleotide) as a cofactor. Post-translationally, predicted to be exported by the Tat system. The position of the signal peptide cleavage has not been experimentally proven.

The protein localises to the cell membrane. The catalysed reaction is dimethyl sulfide + a menaquinone + H2O = dimethyl sulfoxide + a menaquinol. Its function is as follows. Catalyzes the reduction of dimethyl sulfoxide (DMSO) to dimethyl sulfide (DMS). The terminal DMSO reductase can also use various sulfoxides and N-oxide compounds as terminal electron acceptor in addition to DMSO. This is Dimethyl sulfoxide reductase DmsA (dmsA) from Haemophilus influenzae (strain ATCC 51907 / DSM 11121 / KW20 / Rd).